Reading from the N-terminus, the 605-residue chain is DNA mismatch repair protein MutL (605 aa).

Belongs to the DNA mismatch repair MutL/HexB family.

In terms of biological role, this protein is involved in the repair of mismatches in DNA. It is required for dam-dependent methyl-directed DNA mismatch repair. May act as a 'molecular matchmaker', a protein that promotes the formation of a stable complex between two or more DNA-binding proteins in an ATP-dependent manner without itself being part of a final effector complex. The sequence is that of DNA mismatch repair protein MutL from Sinorhizobium medicae (strain WSM419) (Ensifer medicae).